Here is a 96-residue protein sequence, read N- to C-terminus: Pore-forming peptide amoebapore B (96 aa).

The signal sequence occupies residues 1 to 19 (MRAIIFVLIFAIAFAATRE). A Saposin B-type domain is found at 20–96 (GAILCNLCKD…VVVCEKIHAC (77 aa)). Intrachain disulfides connect cysteine 24-cysteine 96, cysteine 27-cysteine 90, and cysteine 54-cysteine 65.

As to quaternary structure, monomer. Homodimer. Hexamer; formed during insertion in the membrane.

The protein resides in the cytoplasmic granule. Its function is as follows. Forms pores in the cell membrane of host cells. Has antibacterial activity against M.luteus, no activity against E.coli. Implicated in the cytolytic activity of the parasite. The protein is Pore-forming peptide amoebapore B of Entamoeba histolytica (strain ATCC 30459 / HM-1:IMSS / ABRM).